Reading from the N-terminus, the 165-residue chain is Small ribosomal subunit protein uS5 (165 aa).

The region spanning 10–73 (LNEKLIAVNR…EKARRNMVTV (64 aa)) is the S5 DRBM domain.

This sequence belongs to the universal ribosomal protein uS5 family. As to quaternary structure, part of the 30S ribosomal subunit. Contacts proteins S4 and S8.

Functionally, with S4 and S12 plays an important role in translational accuracy. In terms of biological role, located at the back of the 30S subunit body where it stabilizes the conformation of the head with respect to the body. This is Small ribosomal subunit protein uS5 from Photobacterium profundum (strain SS9).